Here is a 492-residue protein sequence, read N- to C-terminus: N-succinylglutamate 5-semialdehyde dehydrogenase (492 aa).

220 to 225 (GSASTG) contacts NAD(+). Catalysis depends on residues Glu-243 and Cys-277.

Belongs to the aldehyde dehydrogenase family. AstD subfamily.

The enzyme catalyses N-succinyl-L-glutamate 5-semialdehyde + NAD(+) + H2O = N-succinyl-L-glutamate + NADH + 2 H(+). The protein operates within amino-acid degradation; L-arginine degradation via AST pathway; L-glutamate and succinate from L-arginine: step 4/5. In terms of biological role, catalyzes the NAD-dependent reduction of succinylglutamate semialdehyde into succinylglutamate. The sequence is that of N-succinylglutamate 5-semialdehyde dehydrogenase from Salmonella schwarzengrund (strain CVM19633).